A 311-amino-acid polypeptide reads, in one-letter code: tRNA dimethylallyltransferase (311 aa).

16–23 (GPTASGKS) serves as a coordination point for ATP. Residue 18–23 (TASGKS) coordinates substrate. An interaction with substrate tRNA region spans residues 41-44 (DSMQ).

It belongs to the IPP transferase family. Monomer. Requires Mg(2+) as cofactor.

It catalyses the reaction adenosine(37) in tRNA + dimethylallyl diphosphate = N(6)-dimethylallyladenosine(37) in tRNA + diphosphate. Catalyzes the transfer of a dimethylallyl group onto the adenine at position 37 in tRNAs that read codons beginning with uridine, leading to the formation of N6-(dimethylallyl)adenosine (i(6)A). In Geobacter sulfurreducens (strain ATCC 51573 / DSM 12127 / PCA), this protein is tRNA dimethylallyltransferase.